Consider the following 99-residue polypeptide: UPF0235 protein Sbal223_1335 (99 aa).

This sequence belongs to the UPF0235 family.

The polypeptide is UPF0235 protein Sbal223_1335 (Shewanella baltica (strain OS223)).